We begin with the raw amino-acid sequence, 179 residues long: Large ribosomal subunit protein eL18 (179 aa).

Belongs to the eukaryotic ribosomal protein eL18 family. In terms of assembly, component of the large ribosomal subunit.

The protein localises to the cytoplasm. Its subcellular location is the cytosol. It localises to the rough endoplasmic reticulum. Its function is as follows. Component of the large ribosomal subunit. The ribosome is a large ribonucleoprotein complex responsible for the synthesis of proteins in the cell. The protein is Large ribosomal subunit protein eL18 (rpl18) of Salmo salar (Atlantic salmon).